The following is a 93-amino-acid chain: UPF0473 protein RBAM_024480 (93 aa).

The protein belongs to the UPF0473 family.

This is UPF0473 protein RBAM_024480 from Bacillus velezensis (strain DSM 23117 / BGSC 10A6 / LMG 26770 / FZB42) (Bacillus amyloliquefaciens subsp. plantarum).